The chain runs to 382 residues: 3-isopropylmalate dehydrogenase (382 aa).

91–102 (GPKWGTGSVRPE) contributes to the NAD(+) binding site. Arg-109, Arg-119, Arg-148, and Asp-240 together coordinate substrate. Residues Asp-240, Asp-265, and Asp-269 each coordinate Mg(2+). Position 304–315 (304–315 (GSAPDLTENKVN)) interacts with NAD(+).

The protein belongs to the isocitrate and isopropylmalate dehydrogenases family. In terms of assembly, homodimer. Requires Mg(2+) as cofactor. The cofactor is Mn(2+).

It is found in the cytoplasm. The enzyme catalyses (2R,3S)-3-isopropylmalate + NAD(+) = 4-methyl-2-oxopentanoate + CO2 + NADH. The protein operates within amino-acid biosynthesis; L-leucine biosynthesis; L-leucine from 3-methyl-2-oxobutanoate: step 3/4. Catalyzes the oxidation of 3-carboxy-2-hydroxy-4-methylpentanoate (3-isopropylmalate) to 3-carboxy-4-methyl-2-oxopentanoate. The product decarboxylates to 4-methyl-2 oxopentanoate. In Debaryomyces hansenii (strain ATCC 36239 / CBS 767 / BCRC 21394 / JCM 1990 / NBRC 0083 / IGC 2968) (Yeast), this protein is 3-isopropylmalate dehydrogenase (LEU2).